We begin with the raw amino-acid sequence, 426 residues long: 4-hydroxy-3-methylbut-2-en-1-yl diphosphate synthase (flavodoxin) (426 aa).

The interval 1–20 is disordered; that stretch reads MLDRDLTLSDDAYESSPVSR. The [4Fe-4S] cluster site is built by cysteine 320, cysteine 323, cysteine 366, and glutamate 373.

The protein belongs to the IspG family. It depends on [4Fe-4S] cluster as a cofactor.

It catalyses the reaction (2E)-4-hydroxy-3-methylbut-2-enyl diphosphate + oxidized [flavodoxin] + H2O + 2 H(+) = 2-C-methyl-D-erythritol 2,4-cyclic diphosphate + reduced [flavodoxin]. The protein operates within isoprenoid biosynthesis; isopentenyl diphosphate biosynthesis via DXP pathway; isopentenyl diphosphate from 1-deoxy-D-xylulose 5-phosphate: step 5/6. Converts 2C-methyl-D-erythritol 2,4-cyclodiphosphate (ME-2,4cPP) into 1-hydroxy-2-methyl-2-(E)-butenyl 4-diphosphate. This chain is 4-hydroxy-3-methylbut-2-en-1-yl diphosphate synthase (flavodoxin), found in Wolbachia pipientis subsp. Culex pipiens (strain wPip).